Here is a 349-residue protein sequence, read N- to C-terminus: Protein-glutamate methylesterase/protein-glutamine glutaminase 1 (349 aa).

Residues 2-119 (RTLIVDDSAF…DVNKAEKELV (118 aa)) enclose the Response regulatory domain. Residue aspartate 53 is modified to 4-aspartylphosphate. A CheB-type methylesterase domain is found at 158-345 (ILIGSSTGGP…EEIVKRLEAK (188 aa)). Active-site residues include serine 163, histidine 190, and aspartate 287.

The protein belongs to the CheB family. In terms of processing, phosphorylated by CheA. Phosphorylation of the N-terminal regulatory domain activates the methylesterase activity.

Its subcellular location is the cytoplasm. It carries out the reaction [protein]-L-glutamate 5-O-methyl ester + H2O = L-glutamyl-[protein] + methanol + H(+). It catalyses the reaction L-glutaminyl-[protein] + H2O = L-glutamyl-[protein] + NH4(+). In terms of biological role, involved in chemotaxis. Part of a chemotaxis signal transduction system that modulates chemotaxis in response to various stimuli. Catalyzes the demethylation of specific methylglutamate residues introduced into the chemoreceptors (methyl-accepting chemotaxis proteins or MCP) by CheR. Also mediates the irreversible deamidation of specific glutamine residues to glutamic acid. This is Protein-glutamate methylesterase/protein-glutamine glutaminase 1 from Methanosarcina acetivorans (strain ATCC 35395 / DSM 2834 / JCM 12185 / C2A).